Here is a 127-residue protein sequence, read N- to C-terminus: Gamma-synuclein (127 aa).

2 repeat units span residues 20 to 30 (EKTKQGVTEAA) and 31 to 41 (EKTKEGVMYVG). The segment at 20–67 (EKTKQGVTEAAEKTKEGVMYVGTKTKENVVHSVTSVAEKTKEQANAVS) is 4 X 11 AA tandem repeats of [EGSA]-K-T-K-[EQ]-[GQ]-V-X(4). A 3; approximate repeat occupies 42–56 (TKTKENVVHSVTSVA). Repeat 4 spans residues 57–67 (EKTKEQANAVS). Ser67 and Ser72 each carry phosphoserine. Positions 97 to 127 (KEDLKPSAPQQEGEAAKEKEEVAEEAQSGGD) are disordered. Ser124 bears the Phosphoserine; by BARK1, CaMK2 and CK2 mark.

It belongs to the synuclein family. As to quaternary structure, may be a centrosome-associated protein. Interacts with MYOC; affects its secretion and its aggregation. In terms of processing, phosphorylated. Phosphorylation by GRK5 appears to occur on residues distinct from the residue phosphorylated by other kinases.

The protein localises to the cytoplasm. The protein resides in the perinuclear region. Its subcellular location is the cytoskeleton. It localises to the microtubule organizing center. It is found in the centrosome. The protein localises to the spindle. In terms of biological role, plays a role in neurofilament network integrity. May be involved in modulating axonal architecture during development and in the adult. In vitro, increases the susceptibility of neurofilament-H to calcium-dependent proteases. May also function in modulating the keratin network in skin. Activates the MAPK and Elk-1 signal transduction pathway. This chain is Gamma-synuclein (SNCG), found in Macaca fascicularis (Crab-eating macaque).